Here is a 221-residue protein sequence, read N- to C-terminus: Phosphoglycolate phosphatase (221 aa).

Residue D7 is the Nucleophile of the active site. Mg(2+) contacts are provided by D7 and D9. K148 contributes to the substrate binding site. D171 and D175 together coordinate Mg(2+).

It belongs to the archaeal SPP-like hydrolase family. Mg(2+) is required as a cofactor.

It catalyses the reaction 2-phosphoglycolate + H2O = glycolate + phosphate. Its function is as follows. Catalyzes the dephosphorylation of 2-phosphoglycolate. The protein is Phosphoglycolate phosphatase of Methanothermobacter thermautotrophicus (strain ATCC 29096 / DSM 1053 / JCM 10044 / NBRC 100330 / Delta H) (Methanobacterium thermoautotrophicum).